We begin with the raw amino-acid sequence, 354 residues long: Protein OVEREXPRESSOR OF CATIONIC PEROXIDASE 3 (354 aa).

A Nuclear localization signal 1 motif is present at residues 63 to 70 (NRKGFVSS). Disordered stretches follow at residues 65–98 (KGFV…EDPF) and 151–186 (TGDV…PTKL). Acidic residues predominate over residues 154 to 181 (VDVDVDNDDDDNDDDDNDDDDDDSEEDE). A Nuclear localization signal 2 motif is present at residues 191–198 (LKRLAYAL). The segment at 243 to 264 (KPPVAAPENSSPDPSPVESLSA) is disordered. A DNA-binding region (homeobox) is located at residues 286-345 (RWSAQKRVKKAHIETLEKVYRRSKRPTNAVVSSIVQVTNLPRKRVLKWFEDKRAEDGVPD). The Nuclear localization signal 3 motif lies at 293–300 (VKKAHIET).

The protein resides in the nucleus. Its function is as follows. May modulate chromatin structure by regulation of nucleosome assembly/disassembly. Homeodomain transcription factor that mediates jasmonic acid (JA)-mediated COI1-dependent and abscisic acid (ABA)-mediated PMR4-dependent resistance to infection by necrotrophic fungal pathogens (e.g. B.cinerea and P.cucumerina) and bacterial pathogens (e.g. P.syringae DC3000); this resistance involves at least callose deposition. Required for the P.fluorescens WCS417r-triggered JA-dependent induced systemic resistance (ISR) against both P.syringae DC3000 and H.arabidopsidis. Negative regulator of the ABA-dependent drought resistance. The polypeptide is Protein OVEREXPRESSOR OF CATIONIC PEROXIDASE 3 (Arabidopsis thaliana (Mouse-ear cress)).